The chain runs to 766 residues: Nucleolar complex protein 2 (766 aa).

Positions 1 to 12 are enriched in basic residues; it reads MKLATKKIKTLG. Disordered regions lie at residues 1–73, 100–154, and 674–766; these read MKLA…EELE, DTDD…DEED, and KTGV…LNEW. The span at 14 to 29 shows a compositional bias: basic and acidic residues; it reads SKPDLSKKKPAKDAIR. Residues 33-42 show a composition bias toward polar residues; the sequence is PQTTSETKVT. Basic residues predominate over residues 58–67; that stretch reads KTTKKGFKKS. The span at 100-115 shows a compositional bias: acidic residues; sequence DTDDDDDEEGDEEDKE. Thr101 bears the Phosphothreonine mark. Basic and acidic residues predominate over residues 130 to 140; that stretch reads EKYHKPSKDLE. Over residues 141–154 the composition is skewed to acidic residues; it reads VASDESDFEVDEED. Phosphoserine is present on residues Ser143, Ser146, Ser691, Ser693, and Ser705. The segment covering 706–720 has biased composition (acidic residues); sequence DDDDDEDVQEEEEVE. Residues 757–766 show a composition bias toward basic and acidic residues; sequence IVKDLDLNEW.

Belongs to the NOC2 family.

The protein resides in the nucleus. The sequence is that of Nucleolar complex protein 2 from Drosophila melanogaster (Fruit fly).